The chain runs to 213 residues: Orotate phosphoribosyltransferase (213 aa).

K26 provides a ligand contact to 5-phospho-alpha-D-ribose 1-diphosphate. Residue 34–35 (FF) participates in orotate binding. 5-phospho-alpha-D-ribose 1-diphosphate contacts are provided by residues 72–73 (YK), R99, K100, K103, H105, and 124–132 (DDVITAGTA). Orotate-binding residues include T128 and R156.

The protein belongs to the purine/pyrimidine phosphoribosyltransferase family. PyrE subfamily. As to quaternary structure, homodimer. It depends on Mg(2+) as a cofactor.

It catalyses the reaction orotidine 5'-phosphate + diphosphate = orotate + 5-phospho-alpha-D-ribose 1-diphosphate. It participates in pyrimidine metabolism; UMP biosynthesis via de novo pathway; UMP from orotate: step 1/2. Functionally, catalyzes the transfer of a ribosyl phosphate group from 5-phosphoribose 1-diphosphate to orotate, leading to the formation of orotidine monophosphate (OMP). In Yersinia enterocolitica serotype O:8 / biotype 1B (strain NCTC 13174 / 8081), this protein is Orotate phosphoribosyltransferase.